Consider the following 234-residue polypeptide: Purine nucleoside phosphorylase DeoD-type (234 aa).

An a purine D-ribonucleoside-binding site is contributed by histidine 4. Residues glycine 20, arginine 24, arginine 43, and 87–90 (RIGS) contribute to the phosphate site. A purine D-ribonucleoside contacts are provided by residues glutamate 162, 179-181 (EME), and 203-204 (SD). Catalysis depends on aspartate 204, which acts as the Proton donor.

Belongs to the PNP/UDP phosphorylase family. As to quaternary structure, homohexamer; trimer of homodimers.

It catalyses the reaction a purine D-ribonucleoside + phosphate = a purine nucleobase + alpha-D-ribose 1-phosphate. The catalysed reaction is a purine 2'-deoxy-D-ribonucleoside + phosphate = a purine nucleobase + 2-deoxy-alpha-D-ribose 1-phosphate. Catalyzes the reversible phosphorolytic breakdown of the N-glycosidic bond in the beta-(deoxy)ribonucleoside molecules, with the formation of the corresponding free purine bases and pentose-1-phosphate. The sequence is that of Purine nucleoside phosphorylase DeoD-type from Roseobacter denitrificans (strain ATCC 33942 / OCh 114) (Erythrobacter sp. (strain OCh 114)).